Here is a 515-residue protein sequence, read N- to C-terminus: MTEQPTTTPSALKRAAREFGELTAVADGDVRLTFTQLHDRVRDFAAALSSQDVRPGDHVAVWSPNTYHWVVAALGIHYAGATLVPINTRYTATEALDILERTKTTALVVAGNFLGTDRYASLRDESSTFDLPTVVRVPVDGGDAELPGVFDFDDFLALADEDTRAEADARAAAVSPDDVSDVMFTSGTTGRSKGVMSAHRQSVGIAQAWGECAEVTSDDNYLIINPFFHTFGYKAGFLVCLLNGATVVPMAVFDVPKVMATVHDEQITVLPGAPTIFQSILDHPDRPKYDLSSLRVAITGAAAVPVALVERMQSELSFDAVLTAYGQTEAVVVTMCRTDDDPVTVSTTSGRAIPGMEVRIGDQGEILVRGENVMLGYLDDPESTAKTIDADGWLHTGDVGTLDDRGYVDITDRLKDMYISGGFNVYPAEVENALARLDGVAESAVIGVPDERMGEVGRAYVVAKPGVTLAEDDVVAFCKERLANFKVPRSVRFVDSLPRNPSGKVMKNVLREEKK.

ATP contacts are provided by residues 185–193, D398, R413, and K504; that span reads TSGTTGRSK.

The protein belongs to the ATP-dependent AMP-binding enzyme family.

It carries out the reaction 3-[(3aS,4S,7aS)-7a-methyl-1,5-dioxo-octahydro-1H-inden-4-yl]propanoate + ATP + CoA = 3-[(3aS,4S,7aS)-7a-methyl-1,5-dioxo-octahydro-1H-inden-4-yl]propanoyl-CoA + AMP + diphosphate. Its function is as follows. Involved in the catabolism of the rings C and D of cholesterol. Catalyzes the ATP-dependent CoA thioesterification of 3aalpha-H-4alpha(3'-propanoate)-7abeta-methylhexahydro-1,5-indanedione (HIP). The chain is 3-[(3aS,4S,7aS)-7a-methyl-1,5-dioxo-octahydro-1H-inden-4-yl]propanoyl:CoA ligase from Rhodococcus jostii (strain RHA1).